A 293-amino-acid polypeptide reads, in one-letter code: MVWRTLGASNFSTCPNGSVQWIWDVFGECAQDGWDEASVGLGLVSILCFAASTFPQYIKACKTGNMDQALSLWFLLGWIGGDSCNLIGSFLADQLPLQTYTAVYYVLADLMMLTLYFHYKFKKRPSPLSAPINSVLLFILGTVCITPLLSSTDPVAVPREGFRGRTLLSVEPGNKPFTKKEVIGFVIGSASSLLYLLSRLPQIRTNFIRQSTQGISYSLFALVMLGNTLYGLSVLLKNPEVGQSEGSYLLHHLPWLVGSLGVLLLDTIISIQFLVYRSHETAAASEREPLLPS.

The Lumenal segment spans residues 1–37 (MVWRTLGASNFSTCPNGSVQWIWDVFGECAQDGWDEA). N-linked (GlcNAc...) asparagine glycans are attached at residues Asn-10 and Asn-16. The region spanning 34–100 (WDEASVGLGL…LADQLPLQTY (67 aa)) is the PQ-loop 1 domain. The helical transmembrane segment at 38–58 (SVGLGLVSILCFAASTFPQYI) threads the bilayer. At 59–71 (KACKTGNMDQALS) the chain is on the cytoplasmic side. A helical transmembrane segment spans residues 72 to 92 (LWFLLGWIGGDSCNLIGSFLA). Topologically, residues 93–96 (DQLP) are lumenal. A helical membrane pass occupies residues 97–117 (LQTYTAVYYVLADLMMLTLYF). Residues 118–127 (HYKFKKRPSP) are Cytoplasmic-facing. Residues 128 to 148 (LSAPINSVLLFILGTVCITPL) form a helical membrane-spanning segment. At 149–182 (LSSTDPVAVPREGFRGRTLLSVEPGNKPFTKKEV) the chain is on the lumenal side. Residues 183 to 203 (IGFVIGSASSLLYLLSRLPQI) traverse the membrane as a helical segment. Residues 191–243 (SSLLYLLSRLPQIRTNFIRQSTQGISYSLFALVMLGNTLYGLSVLLKNPEVGQ) form the PQ-loop 2 domain. Topologically, residues 204–214 (RTNFIRQSTQG) are cytoplasmic. A helical transmembrane segment spans residues 215–235 (ISYSLFALVMLGNTLYGLSVL). At 236–254 (LKNPEVGQSEGSYLLHHLP) the chain is on the lumenal side. A helical membrane pass occupies residues 255-275 (WLVGSLGVLLLDTIISIQFLV). Topologically, residues 276-293 (YRSHETAAASEREPLLPS) are cytoplasmic. Positions 290 to 291 (LL) match the Di-leucine motif motif.

Belongs to the laat-1 family. In terms of tissue distribution, ubiquitously expressed.

Its subcellular location is the lysosome membrane. In terms of biological role, amino acid transporter that specifically mediates the pH-dependent export of the cationic amino acids arginine, histidine and lysine from lysosomes. The sequence is that of Lysosomal amino acid transporter 1 homolog from Mus musculus (Mouse).